A 334-amino-acid polypeptide reads, in one-letter code: Protein-methionine-sulfoxide reductase catalytic subunit MsrP (334 aa).

The tat-type signal signal peptide spans 1–44; the sequence is MKKNQFLKESDVTAESVFFMTRRQVLKALGISAAALSLPHAAHA. Mo-molybdopterin is bound by residues N88, 91-92, C146, T181, N233, R238, and 249-251; these read YE and GIK.

This sequence belongs to the MsrP family. In terms of assembly, heterodimer of a catalytic subunit (MsrP) and a heme-binding subunit (MsrQ). It depends on Mo-molybdopterin as a cofactor. In terms of processing, predicted to be exported by the Tat system. The position of the signal peptide cleavage has not been experimentally proven.

It localises to the periplasm. It catalyses the reaction L-methionyl-[protein] + a quinone + H2O = L-methionyl-(S)-S-oxide-[protein] + a quinol. The enzyme catalyses L-methionyl-[protein] + a quinone + H2O = L-methionyl-(R)-S-oxide-[protein] + a quinol. In terms of biological role, part of the MsrPQ system that repairs oxidized periplasmic proteins containing methionine sulfoxide residues (Met-O), using respiratory chain electrons. Thus protects these proteins from oxidative-stress damage caused by reactive species of oxygen and chlorine generated by the host defense mechanisms. MsrPQ is essential for the maintenance of envelope integrity under bleach stress, rescuing a wide series of structurally unrelated periplasmic proteins from methionine oxidation, including the primary periplasmic chaperone SurA and the lipoprotein Pal. The catalytic subunit MsrP is non-stereospecific, being able to reduce both (R-) and (S-) diastereoisomers of methionine sulfoxide. This chain is Protein-methionine-sulfoxide reductase catalytic subunit MsrP, found in Escherichia coli (strain 55989 / EAEC).